A 208-amino-acid chain; its full sequence is MIYVVPDLLEEIFLGLPLKSILRFKTVSKQWRSILESKSFAERRLNVEKKEKILAVGDRTELGFEGEEEIQMVYLHCDIDATRPSLTCEGLVCIPAPGWINVLNPSTRQLRRFPCSPNHHVPSDRIRFQFRDELYLTSFPGNWEMGFGRDKFNGSYKVVRMCFSPVEKCEVLDVETGEWSELNPPPNDIDVGRKSVCVNGSIYWLKNV.

Positions M1–R44 constitute an F-box domain. The stretch at R149–G200 is one Kelch repeat.

This Arabidopsis thaliana (Mouse-ear cress) protein is F-box/kelch-repeat protein At2g43270.